The chain runs to 282 residues: Bis(5'-nucleosyl)-tetraphosphatase, symmetrical (282 aa).

Belongs to the Ap4A hydrolase family.

The enzyme catalyses P(1),P(4)-bis(5'-adenosyl) tetraphosphate + H2O = 2 ADP + 2 H(+). In terms of biological role, hydrolyzes diadenosine 5',5'''-P1,P4-tetraphosphate to yield ADP. The sequence is that of Bis(5'-nucleosyl)-tetraphosphatase, symmetrical from Salmonella paratyphi A (strain ATCC 9150 / SARB42).